Here is a 209-residue protein sequence, read N- to C-terminus: Uracil phosphoribosyltransferase (209 aa).

5-phospho-alpha-D-ribose 1-diphosphate-binding positions include R79, R104, and 131–139; that span reads DPMLATGGS. Uracil is bound by residues I194 and 199 to 201; that span reads GDA. D200 is a binding site for 5-phospho-alpha-D-ribose 1-diphosphate.

This sequence belongs to the UPRTase family. Mg(2+) is required as a cofactor.

It carries out the reaction UMP + diphosphate = 5-phospho-alpha-D-ribose 1-diphosphate + uracil. It participates in pyrimidine metabolism; UMP biosynthesis via salvage pathway; UMP from uracil: step 1/1. With respect to regulation, allosterically activated by GTP. Its function is as follows. Catalyzes the conversion of uracil and 5-phospho-alpha-D-ribose 1-diphosphate (PRPP) to UMP and diphosphate. The polypeptide is Uracil phosphoribosyltransferase (Finegoldia magna (strain ATCC 29328 / DSM 20472 / WAL 2508) (Peptostreptococcus magnus)).